The chain runs to 639 residues: Chaperone protein DnaK (639 aa).

Thr-198 carries the post-translational modification Phosphothreonine; by autocatalysis. The tract at residues 602-639 (QAKSQAQGGDNADAGKQANATADDVVDAEFEEVKDDKK) is disordered. The segment covering 625–639 (DVVDAEFEEVKDDKK) has biased composition (acidic residues).

This sequence belongs to the heat shock protein 70 family.

In terms of biological role, acts as a chaperone. This chain is Chaperone protein DnaK, found in Shewanella baltica (strain OS195).